A 171-amino-acid chain; its full sequence is Co-chaperone protein HscB homolog (171 aa).

The J domain occupies 2 to 74; sequence NHFELFGLPN…VSRAEYILSE (73 aa).

The protein belongs to the HscB family. As to quaternary structure, interacts with HscA and stimulates its ATPase activity.

Co-chaperone involved in the maturation of iron-sulfur cluster-containing proteins. Seems to help targeting proteins to be folded toward HscA. The polypeptide is Co-chaperone protein HscB homolog (Aliivibrio fischeri (strain ATCC 700601 / ES114) (Vibrio fischeri)).